The chain runs to 344 residues: L-rhamnose-proton symporter (344 aa).

A run of 10 helical transmembrane segments spans residues 4-24 (AITM…CFYA), 38-58 (WSVG…ALLL), 74-94 (LPVF…GLTM), 101-121 (MGIG…TPII), 137-157 (TLLG…AGQL), 175-195 (LVLA…MNAA), 214-234 (LPSY…FCFI), 259-279 (VLLS…YAWG), 290-310 (ISWM…GLVL), and 323-343 (VLSL…IGMA).

It belongs to the L-rhamnose transporter (TC 2.A.7.6) family.

It is found in the cell inner membrane. It catalyses the reaction L-rhamnopyranose(in) + H(+)(in) = L-rhamnopyranose(out) + H(+)(out). Uptake of L-rhamnose across the cytoplasmic membrane with the concomitant transport of protons into the cell (symport system). The polypeptide is L-rhamnose-proton symporter (Escherichia coli (strain K12 / MC4100 / BW2952)).